We begin with the raw amino-acid sequence, 88 residues long: Antitoxin VapB21 (88 aa).

Its function is as follows. Antitoxin component of a type II toxin-antitoxin (TA) system. This chain is Antitoxin VapB21 (vapB21), found in Mycobacterium tuberculosis (strain CDC 1551 / Oshkosh).